The following is an 898-amino-acid chain: Vacuolar membrane protease (898 aa).

Topologically, residues 1–14 (MGIVDYLVAAVSFR) are cytoplasmic. The chain crosses the membrane as a helical span at residues 15–35 (TLPTTFVAVLVYLAIFISVLI). Over 36–342 (TDELPATPKD…LFGQALIVFP (307 aa)) the chain is Vacuolar. Asn50, Asn103, and Asn110 each carry an N-linked (GlcNAc...) asparagine glycan. His139 and Asp151 together coordinate Zn(2+). The Proton acceptor role is filled by Glu183. Glu184 contributes to the Zn(2+) binding site. N-linked (GlcNAc...) asparagine glycosylation occurs at Asn200. Zn(2+) is bound by residues Glu209 and His284. The chain crosses the membrane as a helical span at residues 343–365 (LSAMITFNIVFLVVGPIMLALLV). Residues 366-411 (TFDIVARHRRQEMIGGGYEEQGFFARAWTSFKSFRWVGGFWKHAKF) are Cytoplasmic-facing. The helical transmembrane segment at 412 to 432 (WVALAVTVGLQVLLCVGYLYI) threads the bilayer. Position 433 (Asn433) is a topological domain, vacuolar. The helical transmembrane segment at 434-454 (PLIAYSSSHIVLLSFLSLAYL) threads the bilayer. Topologically, residues 455–479 (STYLVHNIPSPTDTYGSHLPEQQKQ) are cytoplasmic. Residues 480-500 (AALFQLYFFTWILLLAATVVG) form a helical membrane-spanning segment. The Vacuolar portion of the chain corresponds to 501–509 (AKLSVGSFY). The chain crosses the membrane as a helical span at residues 510-530 (ILSLWNAVLFAACAIGSIAGL). Topologically, residues 531 to 593 (LSSHTVEGDA…PGGKEGEEVS (63 aa)) are cytoplasmic. Residues 594–614 (GAIGWWFVQFVLSVPAVVILV) traverse the membrane as a helical segment. At 615–635 (SQLALLMLAATEQTLADGSPA) the chain is on the vacuolar side. Residues 636–656 (VTVYGGASLMSVLAILPLAPF) form a helical membrane-spanning segment. At 657–664 (ACKLHRRV) the chain is on the cytoplasmic side. The chain crosses the membrane as a helical span at residues 665 to 685 (AYVALVVLIASTAYAWLVFPF). Topologically, residues 686 to 898 (SERAPLKVFF…LVEGYKAFAV (213 aa)) are vacuolar. Residues Asn704, Asn733, and Asn764 are each glycosylated (N-linked (GlcNAc...) asparagine).

This sequence belongs to the peptidase M28 family. Zn(2+) serves as cofactor.

The protein resides in the vacuole membrane. May be involved in vacuolar sorting and osmoregulation. The chain is Vacuolar membrane protease from Schizophyllum commune (strain H4-8 / FGSC 9210) (Split gill fungus).